A 643-amino-acid chain; its full sequence is UvrABC system protein C (643 aa).

In terms of domain architecture, GIY-YIG spans 25-104 (AEPGVYFMRD…IKQHQPHFNV (80 aa)). Positions 214 to 249 (SELVELLEAQMLQAAENLEFEKAAKIRDQIRGLEGL) constitute a UVR domain.

This sequence belongs to the UvrC family. Interacts with UvrB in an incision complex.

The protein localises to the cytoplasm. Its function is as follows. The UvrABC repair system catalyzes the recognition and processing of DNA lesions. UvrC both incises the 5' and 3' sides of the lesion. The N-terminal half is responsible for the 3' incision and the C-terminal half is responsible for the 5' incision. The protein is UvrABC system protein C of Synechococcus elongatus (strain ATCC 33912 / PCC 7942 / FACHB-805) (Anacystis nidulans R2).